Here is a 94-residue protein sequence, read N- to C-terminus: Acylphosphatase (94 aa).

The 88-residue stretch at 3-90 folds into the Acylphosphatase-like domain; it reads RVHVIVEGRV…SDEKQFRIMY (88 aa). Catalysis depends on residues Arg-18 and Asn-36.

It belongs to the acylphosphatase family.

The catalysed reaction is an acyl phosphate + H2O = a carboxylate + phosphate + H(+). This is Acylphosphatase (acyP) from Geobacillus kaustophilus (strain HTA426).